The sequence spans 364 residues: Uroporphyrinogen decarboxylase (364 aa).

Residues Arg34, Ala36, Arg38, Arg47, Asp83, Tyr161, Ser216, and His336 each contribute to the coproporphyrinogen I site. 3 residues coordinate coproporphyrinogen III: Arg34, Ala36, and Arg38. Residues Asp83, Tyr161, Ser216, and His336 each coordinate coproporphyrinogen III.

The protein belongs to the uroporphyrinogen decarboxylase family. As to quaternary structure, homodimer.

Its subcellular location is the cytoplasm. The protein localises to the cytosol. It catalyses the reaction uroporphyrinogen III + 4 H(+) = coproporphyrinogen III + 4 CO2. It carries out the reaction uroporphyrinogen I + 4 H(+) = coproporphyrinogen I + 4 CO2. The protein operates within porphyrin-containing compound metabolism; protoporphyrin-IX biosynthesis; coproporphyrinogen-III from 5-aminolevulinate: step 4/4. In terms of biological role, catalyzes the sequential decarboxylation of the four acetate side chains of uroporphyrinogen to form coproporphyrinogen and participates in the fifth step in the heme biosynthetic pathway. Isomer I or isomer III of uroporphyrinogen may serve as substrate, but only coproporphyrinogen III can ultimately be converted to heme. In vitro also decarboxylates pentacarboxylate porphyrinogen I. In Rattus norvegicus (Rat), this protein is Uroporphyrinogen decarboxylase.